Here is a 230-residue protein sequence, read N- to C-terminus: Endonuclease NucS (230 aa).

The protein belongs to the NucS endonuclease family.

The protein localises to the cytoplasm. Functionally, cleaves both 3' and 5' ssDNA extremities of branched DNA structures. The chain is Endonuclease NucS from Corynebacterium glutamicum (strain R).